The following is a 172-amino-acid chain: Large ribosomal subunit protein bL17m (172 aa).

The transit peptide at 1–8 (MRLSFAAA) directs the protein to the mitochondrion.

The protein belongs to the bacterial ribosomal protein bL17 family. As to quaternary structure, component of the mitochondrial ribosome large subunit (39S) which comprises a 16S rRNA and about 50 distinct proteins.

It is found in the mitochondrion. In Bos taurus (Bovine), this protein is Large ribosomal subunit protein bL17m (MRPL17).